We begin with the raw amino-acid sequence, 780 residues long: LPS-assembly protein LptD (780 aa).

Positions Met-1–Ala-24 are cleaved as a signal peptide.

The protein belongs to the LptD family. In terms of assembly, component of the lipopolysaccharide transport and assembly complex. Interacts with LptE and LptA.

The protein resides in the cell outer membrane. Its function is as follows. Together with LptE, is involved in the assembly of lipopolysaccharide (LPS) at the surface of the outer membrane. This chain is LPS-assembly protein LptD, found in Sodalis glossinidius (strain morsitans).